Here is a 122-residue protein sequence, read N- to C-terminus: Fluoride-specific ion channel FluC (122 aa).

Transmembrane regions (helical) follow at residues 5–25 (FLIG…SGII), 29–49 (FGIP…VGFL), 65–85 (FIIT…YESF), and 93–113 (FIKS…MIYF). Residues glycine 72 and threonine 75 each contribute to the Na(+) site.

This sequence belongs to the fluoride channel Fluc/FEX (TC 1.A.43) family.

It localises to the cell membrane. The enzyme catalyses fluoride(in) = fluoride(out). Its activity is regulated as follows. Na(+) is not transported, but it plays an essential structural role and its presence is essential for fluoride channel function. Fluoride-specific ion channel. Important for reducing fluoride concentration in the cell, thus reducing its toxicity. This Methanococcus vannielii (strain ATCC 35089 / DSM 1224 / JCM 13029 / OCM 148 / SB) protein is Fluoride-specific ion channel FluC.